The sequence spans 1094 residues: Probable serine/threonine-protein kinase kinX (1094 aa).

The 260-residue stretch at L22–L281 folds into the Protein kinase domain. ATP contacts are provided by residues I28 to V36 and K49. Catalysis depends on D146, which acts as the Proton acceptor. 2 disordered regions span residues T301–D884 and I946–K1083. Positions Y330–D344 are enriched in acidic residues. Positions S351–G373 are enriched in polar residues. The segment covering Q374–Q387 has biased composition (low complexity). Residues D393–D408 are compositionally biased toward acidic residues. Positions D410–E424 are enriched in basic and acidic residues. 3 stretches are compositionally biased toward acidic residues: residues S433–Q454, D480–E496, and D503–E523. Low complexity-rich tracts occupy residues I526 to Q542 and R564 to Q585. A compositionally biased stretch (acidic residues) spans Y587–D602. A compositionally biased stretch (basic and acidic residues) spans D603–Q639. Low complexity predominate over residues Q650–Q661. The span at P670–E801 shows a compositional bias: basic and acidic residues. A 40 X 9 AA approximate repeats of V-K-V-E-E-P-V-E-E region spans residues V676–V978. The span at P802 to V816 shows a compositional bias: acidic residues. Composition is skewed to basic and acidic residues over residues E817–D884 and I946–K971. Composition is skewed to low complexity over residues V972–Q985 and V992–P1011. A compositionally biased stretch (polar residues) spans V1016 to I1031. The segment covering K1032–K1050 has biased composition (low complexity).

Belongs to the protein kinase superfamily. TKL Ser/Thr protein kinase family.

It carries out the reaction L-seryl-[protein] + ATP = O-phospho-L-seryl-[protein] + ADP + H(+). It catalyses the reaction L-threonyl-[protein] + ATP = O-phospho-L-threonyl-[protein] + ADP + H(+). The chain is Probable serine/threonine-protein kinase kinX (kinX) from Dictyostelium discoideum (Social amoeba).